Reading from the N-terminus, the 427-residue chain is Ceramide Synthase FUM18 (427 aa).

A glycan (N-linked (GlcNAc...) asparagine) is linked at asparagine 20. A run of 6 helical transmembrane segments spans residues 38 to 58, 131 to 151, 173 to 193, 202 to 222, 250 to 270, and 335 to 355; these read ILPL…IHIS, EQGW…LIWA, GLIK…VISV, YWLN…CYVY, YLGF…TWIV, and VSIL…FGFI. A TLC domain is found at 124–364; that stretch reads RKVVRFSEQG…ICKVAIGVLD (241 aa). The segment at 373 to 406 is disordered; sequence SDVESDEEDSEPVANGSGWQQSQLQPGRRVGSNG. Asparagine 387 carries an N-linked (GlcNAc...) asparagine glycan.

It belongs to the sphingosine N-acyltransferase family.

It is found in the endoplasmic reticulum membrane. Its pathway is mycotoxin biosynthesis. Ceramide synthase; part of the gene cluster that mediates the biosynthesis of fumonisins B1 (FB1), B2 (FB2), B3 (FB3), and B4 (FB4), which are carcinogenic mycotoxins. Plays a role in self-protection from FB1 toxicity by contributing to ceramide synthesis. The biosynthesis starts with the FUM1-catalyzed carbon chain assembly from one molecule of acetyl-CoA, eight molecules of malonyl-CoA, and two molecules of methionine (in S-adenosyl form). The C18 polyketide chain is released from the enzyme by a nucleophilic attack of a carbanion, which is derived from R-carbon of alanine by decarboxylation, on the carbonyl carbon of polyketide acyl chain. This step is catalyzed by the pyridoxal 5'-phosphate-dependent aminoacyl transferase FUM8. The resultant 3-keto intermediate is then stereospecifically reduced to a 3-hydroxyl product by reductase FUM13. Subsequent oxidations at C-10 by the cytochrome P450 monooxygenase FUM2, C-14 and C-15 by FUM6, FUM12 or FUM15, tricarballylic esterification of the hydroxyl groups on C-14 and C-15 by acyltransferase FUM14, and C-5 hydroxylation by 2-keto-glutarate-dependent dioxygenase FUM3 furnish the biosynthesis of fumonisins. The tricarballylic moieties are most likely derived from the citric acid cycle, and their addition to the carbon backbone may involve FUM7, FUM10, FUM11 and FUM14. The chain is Ceramide Synthase FUM18 from Gibberella moniliformis (strain M3125 / FGSC 7600) (Maize ear and stalk rot fungus).